A 161-amino-acid chain; its full sequence is Transcription initiation factor TFIID subunit 12 (161 aa).

The tract at residues 15 to 55 (FSSIKPEPASTPPQGSMANSTAVVKIPGTPGAGGRLSPENN) is disordered. Lys19 participates in a covalent cross-link: Glycyl lysine isopeptide (Lys-Gly) (interchain with G-Cter in SUMO2). The span at 26 to 36 (PPQGSMANSTA) shows a compositional bias: polar residues. The residue at position 43 (Thr43) is a Phosphothreonine. Ser51 is subject to Phosphoserine. The residue at position 59 (Thr59) is a Phosphothreonine. Residues 59–126 (TKKKLQDLVR…QLHLERQWNM (68 aa)) enclose the Histone-fold domain.

It belongs to the TAF12 family. Component of the TFIID basal transcription factor complex, composed of TATA-box-binding protein TBP, and a number of TBP-associated factors (TAFs), including TAF1, TAF2, TAF3, TAF4, TAF5, TAF6, TAF7, TAF8, TAF9, TAF10, TAF11, TAF12 and TAF13. Component of the TATA-binding protein-free TAF complex (TFTC), the PCAF histone acetylase complex and the STAGA transcription coactivator-HAT complex. Component of the PCAF complex, at least composed of TADA2L/ADA2, TADA3L/ADA3, TAF5L/PAF65-beta, SUPT3H, TAF6L, TAF9, TAF10, TAF12 and TRRAP. Component of the STAGA transcription coactivator-HAT complex, at least composed of SUPT3H, GCN5L2, TAF5L, TAF6L, STAF65-gamma/SUPT7L, TADA3L, TAD1L, TAF10, TAF12, TRRAP and TAF9. Interacts with ATF7 (via the transactivation domain); the interaction is prevented by sumoylation of ATF7. In terms of assembly, interacts with TBP; the interaction is direct. Interacts with TAF10; the interaction is direct. Interacts with ATF7, promoting transactivation by ATF7. As to quaternary structure, does not promote the transactivation of ATF7. Ubiquitous.

It is found in the nucleus. Its function is as follows. The TFIID basal transcription factor complex plays a major role in the initiation of RNA polymerase II (Pol II)-dependent transcription. TFIID recognizes and binds promoters with or without a TATA box via its subunit TBP, a TATA-box-binding protein, and promotes assembly of the pre-initiation complex (PIC). The TFIID complex consists of TBP and TBP-associated factors (TAFs), including TAF1, TAF2, TAF3, TAF4, TAF5, TAF6, TAF7, TAF8, TAF9, TAF10, TAF11, TAF12 and TAF13. Component of the TATA-binding protein-free TAF complex (TFTC), the PCAF histone acetylase complex and the STAGA transcription coactivator-HAT complex. The chain is Transcription initiation factor TFIID subunit 12 from Homo sapiens (Human).